The chain runs to 146 residues: Aminoglycoside N(6')-acetyltransferase type 1 (146 aa).

Positions 1-146 constitute an N-acetyltransferase domain; that stretch reads MNIMPVSESL…RVVYFKKHIG (146 aa). Substrate-binding residues include W22, H25, Y66, and E79. Position 81 to 83 (81 to 83) interacts with acetyl-CoA; sequence IYV. D115 contributes to the substrate binding site. N120 provides a ligand contact to acetyl-CoA. E136 serves as a coordination point for substrate.

In terms of assembly, homodimer.

The catalysed reaction is kanamycin B + acetyl-CoA = N(6')-acetylkanamycin B + CoA + H(+). Catalyzes the transfer of an acetyl group from acetyl-CoA to the 6'-amino group of aminoglycoside molecules conferring resistance to antibiotics containing the purpurosamine ring including amikacin, kanamycin, tobramycin and netilmicin. This is Aminoglycoside N(6')-acetyltransferase type 1 from Acinetobacter genomosp. 13.